Here is a 337-residue protein sequence, read N- to C-terminus: Ferredoxin--NADP reductase (337 aa).

Residues D35, Q43, Y48, A88, F122, D289, and T330 each contribute to the FAD site.

The protein belongs to the ferredoxin--NADP reductase type 2 family. Homodimer. FAD is required as a cofactor.

It carries out the reaction 2 reduced [2Fe-2S]-[ferredoxin] + NADP(+) + H(+) = 2 oxidized [2Fe-2S]-[ferredoxin] + NADPH. In Ehrlichia ruminantium (strain Gardel), this protein is Ferredoxin--NADP reductase.